Consider the following 353-residue polypeptide: Nicotinate-nucleotide--dimethylbenzimidazole phosphoribosyltransferase (353 aa).

The active-site Proton acceptor is E320.

It belongs to the CobT family.

The catalysed reaction is 5,6-dimethylbenzimidazole + nicotinate beta-D-ribonucleotide = alpha-ribazole 5'-phosphate + nicotinate + H(+). The protein operates within nucleoside biosynthesis; alpha-ribazole biosynthesis; alpha-ribazole from 5,6-dimethylbenzimidazole: step 1/2. Its function is as follows. Catalyzes the synthesis of alpha-ribazole-5'-phosphate from nicotinate mononucleotide (NAMN) and 5,6-dimethylbenzimidazole (DMB). This chain is Nicotinate-nucleotide--dimethylbenzimidazole phosphoribosyltransferase, found in Syntrophotalea carbinolica (strain DSM 2380 / NBRC 103641 / GraBd1) (Pelobacter carbinolicus).